Here is a 241-residue protein sequence, read N- to C-terminus: Phycocyanobilin:ferredoxin oxidoreductase (241 aa).

It belongs to the HY2 family.

The enzyme catalyses (2R,3Z)-phycocyanobilin + 4 oxidized [2Fe-2S]-[ferredoxin] = biliverdin IXalpha + 4 reduced [2Fe-2S]-[ferredoxin] + 4 H(+). Catalyzes the four-electron reduction of biliverdin IX-alpha (2-electron reduction at both the A and D rings); the reaction proceeds via an isolatable 2-electron intermediate, 181,182-dihydrobiliverdin. In Prochlorococcus marinus (strain MIT 9301), this protein is Phycocyanobilin:ferredoxin oxidoreductase.